The primary structure comprises 177 residues: Transcription antitermination protein NusB (177 aa).

A disordered region spans residues 1–35; the sequence is MTDSANPTPSARPPRQPRTGTTGTGARKAGSKSGR. Residues 17–28 show a composition bias toward low complexity; it reads PRTGTTGTGARK.

Belongs to the NusB family.

Involved in transcription antitermination. Required for transcription of ribosomal RNA (rRNA) genes. Binds specifically to the boxA antiterminator sequence of the ribosomal RNA (rrn) operons. This is Transcription antitermination protein NusB from Acidovorax ebreus (strain TPSY) (Diaphorobacter sp. (strain TPSY)).